We begin with the raw amino-acid sequence, 102 residues long: Polymeric immunoglobulin receptor (102 aa).

Interacts (mainly via CDR1-like domain) with dimeric IgA. Interacts (mainly via CDR2-like domain) with pentameric IgM. Either free or part of the secretory IgA (sIgA) complex that consists of two, four or five IgA monomers, and two additional non-Ig polypeptides, namely the JCHAIN and the secretory component (the proteolytic product of PIGR). Free secretory component interacts with bacterial antigens toxA of C.difficile and eaeA of E.coli. In terms of processing, N-glycosylated. N-glycosylation is required for anchoring IgA molecules to mucus, but is not necessary for Ig binding.

Its subcellular location is the cell membrane. It localises to the secreted. Mediates selective transcytosis of polymeric IgA and IgM across mucosal epithelial cells. Binds polymeric IgA and IgM at the basolateral surface of epithelial cells. The complex is then transported across the cell to be secreted at the apical surface. During this process, a cleavage occurs that separates the extracellular (known as the secretory component) from the transmembrane segment. Through its N-linked glycans ensures anchoring of secretory IgA (sIgA) molecules to mucus lining the epithelial surface to neutralize extracellular pathogens. On its own (free form) may act as a non-specific microbial scavenger to prevent pathogen interaction with epithelial cells. The chain is Polymeric immunoglobulin receptor (PIGR) from Sus scrofa (Pig).